Consider the following 299-residue polypeptide: Virginiamycin B lyase (299 aa).

His-229 provides a ligand contact to substrate. Glu-269 contributes to the Mg(2+) binding site. The Proton acceptor role is filled by His-271. Mg(2+) is bound at residue Glu-286.

The protein belongs to the Vgb family. As to quaternary structure, monomer. Mg(2+) is required as a cofactor.

In terms of biological role, inactivates the type B streptogramin antibiotics by linearizing the lactone ring at the ester linkage, generating a free phenylglycine carboxylate and converting the threonyl moiety into 2-amino-butenoic acid. The protein is Virginiamycin B lyase (vgb) of Bordetella pertussis (strain Tohama I / ATCC BAA-589 / NCTC 13251).